Here is a 185-residue protein sequence, read N- to C-terminus: Pericyclase pydY (185 aa).

The protein belongs to the pericyclase pydY family.

Its pathway is mycotoxin biosynthesis. Functionally, pericyclase; part of the gene cluster that mediates the biosynthesis of pyrrocidines, fungal natural products containing a macrocyclic para-cyclophane connected to a decahydrofluorene ring system that show potent antibiotic activities toward Gram-negative bacteria. Within the pathway, pydY is involved in the late Diels-Alder cycloaddition step that leads to the formation of the decahydrofluorene core. The pathway begins with the PKS-NRPS pydA which, with the help of the trans-enoyl reductase pydC, synthesizes the polyketide-tyrosyl acyl thioester product which can be reductively off-loaded by the terminal reductase (R) domain in pydA. The alpha/beta hydrolase pydG is then required to catalyze the subsequent Knoevenagel condensation that affords the 3-pyrrolin-2-one ring, whereas the four proteins pydB, pydE, pydX and pydZ then function synergistically to form the cyclophane. PydB and the membrane-bound pydX and pydZ are lipid-binding proteins that can sequester and mold the pdyG product into the inverse S-shape. Binding of the medium chain reductase pydE to the complex would trigger the cascade oxidative cyclization. PydY is involved in the Diels-Alder cycloaddition that forms the decahydrofluorene core. Additional non-enzymatic hydroxylation yields pyrrocidine A2 which can be further reduced into pyrrocidine B by an endogenous reductase. The chain is Pericyclase pydY from Acremonium sp.